We begin with the raw amino-acid sequence, 792 residues long: Phenylalanine--tRNA ligase beta subunit (792 aa).

The region spanning 39-150 (APAFHKVVVA…PDAPVGTDFR (112 aa)) is the tRNA-binding domain. A B5 domain is found at 405–480 (PARDPIRLGL…RMYGYNRIAA (76 aa)). Mg(2+) contacts are provided by D458, D464, E467, and E468. One can recognise an FDX-ACB domain in the interval 698–791 (SKYPPIRRDI…LENRFGARLR (94 aa)).

Belongs to the phenylalanyl-tRNA synthetase beta subunit family. Type 1 subfamily. As to quaternary structure, tetramer of two alpha and two beta subunits. Mg(2+) serves as cofactor.

It is found in the cytoplasm. The catalysed reaction is tRNA(Phe) + L-phenylalanine + ATP = L-phenylalanyl-tRNA(Phe) + AMP + diphosphate + H(+). The sequence is that of Phenylalanine--tRNA ligase beta subunit from Nitrosospira multiformis (strain ATCC 25196 / NCIMB 11849 / C 71).